Here is a 199-residue protein sequence, read N- to C-terminus: Glycerol-3-phosphate acyltransferase (199 aa).

5 consecutive transmembrane segments (helical) span residues 5–25 (AYLLILTAYLLGSICSAIIFC), 54–74 (AAIGVLLFDTLKGSLPVLIAF), 82–102 (AIGLIGLAACLGHIFPIFFQF), 114–134 (VFFSISIIASTTMICAWLIVF), and 154–174 (YIWCFKPEFTFPVALICCLLI).

Belongs to the PlsY family. Probably interacts with PlsX.

Its subcellular location is the cell inner membrane. The catalysed reaction is an acyl phosphate + sn-glycerol 3-phosphate = a 1-acyl-sn-glycero-3-phosphate + phosphate. The protein operates within lipid metabolism; phospholipid metabolism. In terms of biological role, catalyzes the transfer of an acyl group from acyl-phosphate (acyl-PO(4)) to glycerol-3-phosphate (G3P) to form lysophosphatidic acid (LPA). This enzyme utilizes acyl-phosphate as fatty acyl donor, but not acyl-CoA or acyl-ACP. The polypeptide is Glycerol-3-phosphate acyltransferase (Haemophilus ducreyi (strain 35000HP / ATCC 700724)).